Reading from the N-terminus, the 325-residue chain is ADP-ribose glycohydrolase MACROD1 (325 aa).

N6-succinyllysine is present on residues lysine 96, lysine 103, and lysine 129. Lysine 138 is covalently cross-linked (Glycyl lysine isopeptide (Lys-Gly) (interchain with G-Cter in SUMO2)). A Macro domain is found at 141-322; it reads EPRYKKDKQL…IYRSRLPHYF (182 aa). 159 to 161 contacts substrate; sequence SDI. N6-acetyllysine is present on lysine 163. Substrate contacts are provided by residues 172–174, 179–184, 267–273, and phenylalanine 306; these read AAN, GGGGVD, and ISTGVFG.

This sequence belongs to the MacroD-type family. MacroD1/2-like subfamily. As to quaternary structure, interacts with ESR1; Interacts in a manner that is estrogen independent but is enhanced by estrogen. Interacts (via macro domain) with AR.

The protein resides in the nucleus. It carries out the reaction 3''-O-acetyl-ADP-D-ribose + H2O = ADP-D-ribose + acetate + H(+). It catalyses the reaction 2''-O-acetyl-ADP-D-ribose + H2O = ADP-D-ribose + acetate + H(+). The catalysed reaction is 4-O-(ADP-D-ribosyl)-L-aspartyl-[protein] + H2O = L-aspartyl-[protein] + ADP-D-ribose + H(+). The enzyme catalyses 5-O-(ADP-D-ribosyl)-L-glutamyl-[protein] + H2O = L-glutamyl-[protein] + ADP-D-ribose + H(+). It carries out the reaction alpha-NAD(+) + H2O = ADP-D-ribose + nicotinamide + H(+). Subject to competitive inhibition by the product ADP-ribose. Functionally, removes ADP-ribose from aspartate and glutamate residues in proteins bearing a single ADP-ribose moiety. Inactive towards proteins bearing poly-ADP-ribose. Deacetylates O-acetyl-ADP ribose, a signaling molecule generated by the deacetylation of acetylated lysine residues in histones and other proteins. Plays a role in estrogen signaling. Binds to androgen receptor (AR) and amplifies the transactivation function of AR in response to androgen. May play an important role in carcinogenesis and/or progression of hormone-dependent cancers by feed-forward mechanism that activates ESR1 transactivation. Could be an ESR1 coactivator, providing a positive feedback regulatory loop for ESR1 signal transduction. Could be involved in invasive growth by down-regulating CDH1 in endometrial cancer cells. Enhances ESR1-mediated transcription activity. The chain is ADP-ribose glycohydrolase MACROD1 from Homo sapiens (Human).